The following is a 1147-amino-acid chain: Sterol regulatory element-binding protein 1 (1147 aa).

Positions 1 to 60 are transcriptional activation (acidic); sequence MDEPPFSEAALEQALGEPCDLDAALLTDIEDMLQLINNQDSDFPGLFDPPYAGSGAGGTD. At 1–487 the chain is on the cytoplasmic side; that stretch reads MDEPPFSEAA…HSRGMLDRSR (487 aa). Residues 27–35 carry the 9aaTAD motif; that stretch reads TDIEDMLQL. The segment at 39–193 is disordered; sequence QDSDFPGLFD…PLPGLPLASP (155 aa). Low complexity-rich tracts occupy residues 62–71 and 78–95; these read ASPDTSSPGS and TLSS…AAPS. Positions 96-105 are enriched in pro residues; that stretch reads PLSPPQPAPT. 2 positions are modified to phosphoserine: Ser98 and Ser117. Residues 170-190 show a composition bias toward low complexity; it reads GGFSTGSPPGNTQQPLPGLPL. The segment at 234-497 is interaction with LMNA; it reads QQVPVLLQPH…LALCTLVFLC (264 aa). The 51-residue stretch at 323-373 folds into the bHLH domain; that stretch reads EKRTAHNAIEKRYRSSINDKIIELKDLVVGTEAKLNKSAVLRKAIDYIRFL. Phosphoserine; by SIK1 is present on residues Ser337 and Ser338. A leucine-zipper region spans residues 373–394; it reads LQHSNQKLKQENLSLRTAVHKS. A Phosphoserine; by AMPK modification is found at Ser396. Ser402 is modified (phosphoserine; by SIK1). Residues 421–479 are disordered; the sequence is VEDTLTPPPSDAGSPFQSSPLSLGSRGSGSGGSGSDSEPDSPVFEDSKAKPEQRPSLHS. At Ser457 the chain carries Phosphoserine. Basic and acidic residues predominate over residues 465-479; sequence EDSKAKPEQRPSLHS. The helical transmembrane segment at 488–508 threads the bilayer; the sequence is LALCTLVFLCLSCNPLASLLG. Topologically, residues 509–547 are lumenal; it reads ARGLPSPSDTTSVYHSPGRNVLGTESRDGPGWAQWLLPP. Residues 548–568 form a helical membrane-spanning segment; the sequence is VVWLLNGLLVLVSLVLLFVYG. Topologically, residues 569 to 1147 are cytoplasmic; that stretch reads EPVTRPHSGP…LGGGTTVTSS (579 aa). Phosphoserine is present on Ser1060.

It belongs to the SREBP family. Forms a tight complex with SCAP, the SCAP-SREBP complex, in the endoplasmic reticulum membrane and the Golgi apparatus. Interacts with PAQR3; the interaction anchors the SCAP-SREBP complex to the Golgi apparatus in low cholesterol conditions. As to quaternary structure, efficient DNA binding of the soluble transcription factor fragment requires dimerization with another bHLH protein. Interacts with CEBPA, the interaction produces a transcriptional synergy. Interacts with LMNA. In terms of processing, processed in the Golgi apparatus, releasing the protein from the membrane. At low cholesterol the SCAP-SREBP complex is recruited into COPII vesicles for export from the endoplasmic reticulum. In the Golgi, complex SREBPs are cleaved sequentially by site-1 (MBTPS1, S1P) and site-2 (MBTPS2, S2P) protease. The first cleavage by site-1 protease occurs within the luminal loop, the second cleavage by site-2 protease occurs within the first transmembrane domain, releasing the transcription factor from the Golgi membrane. Post-translationally, phosphorylated by AMPK, leading to suppress protein processing and nuclear translocation, and repress target gene expression. Phosphorylation at Ser-402 by SIK1 represses activity possibly by inhibiting DNA-binding. SCAP-free SREBF1 is ubiquitinated by the BCR(ARMC5) complex, leading to its degradation. In terms of processing, ubiquitinated; the nuclear form has a rapid turnover and is rapidly ubiquitinated and degraded by the proteasome in the nucleus. As to expression, expressed in a wide variety of tissues, most abundant in liver and adrenal gland. In fetal tissues lung and liver shows highest expression. In terms of tissue distribution, predominates in hepatoma cell lines. Also expressed in kidney, brain, white fat, and muscle. Predominantly expressed in liver and adipose tissues. Also expressed in kidney, brain, white fat, and muscle.

It localises to the endoplasmic reticulum membrane. The protein localises to the golgi apparatus membrane. Its subcellular location is the cytoplasmic vesicle. It is found in the COPII-coated vesicle membrane. The protein resides in the nucleus. With respect to regulation, activation by cleavage is down-regulated upon activation of SIRT3-dependent PRKAA1/AMPK-alpha signaling cascade which leads to inhibition of ATP-consuming lipogenesis to restore cellular energy balance. Precursor of the transcription factor form (Processed sterol regulatory element-binding protein 1), which is embedded in the endoplasmic reticulum membrane. Low sterol concentrations promote processing of this form, releasing the transcription factor form that translocates into the nucleus and activates transcription of genes involved in cholesterol biosynthesis and lipid homeostasis. Functionally, key transcription factor that regulates expression of genes involved in cholesterol biosynthesis and lipid homeostasis. Binds to the sterol regulatory element 1 (SRE-1) (5'-ATCACCCCAC-3'). Has dual sequence specificity binding to both an E-box motif (5'-ATCACGTGA-3') and to SRE-1 (5'-ATCACCCCAC-3'). Regulates the promoters of genes involved in cholesterol biosynthesis and the LDL receptor (LDLR) pathway of sterol regulation. Its function is as follows. Isoform expressed only in select tissues, which has higher transcriptional activity compared to SREBP-1C. Able to stimulate both lipogenic and cholesterogenic gene expression. Has a role in the nutritional regulation of fatty acids and triglycerides in lipogenic organs such as the liver. Required for innate immune response in macrophages by regulating lipid metabolism. In terms of biological role, predominant isoform expressed in most tissues, which has weaker transcriptional activity compared to isoform SREBP-1A. Primarily controls expression of lipogenic gene. Strongly activates global lipid synthesis in rapidly growing cells. The absence of Golgi proteolytic processing requirement makes this isoform constitutively active in transactivation of lipogenic gene promoters. In Homo sapiens (Human), this protein is Sterol regulatory element-binding protein 1.